The following is an 86-amino-acid chain: Small ribosomal subunit protein bS20 (86 aa).

Residues 1-27 (MANSKQAKKRAGQSEKRRQHNASRRSM) are disordered.

This sequence belongs to the bacterial ribosomal protein bS20 family.

Binds directly to 16S ribosomal RNA. The sequence is that of Small ribosomal subunit protein bS20 from Colwellia psychrerythraea (strain 34H / ATCC BAA-681) (Vibrio psychroerythus).